A 456-amino-acid polypeptide reads, in one-letter code: Probable transcription factor At3g04930 (456 aa).

The interval 1–71 (MTSDHRDALF…LNSPSTSSLP (71 aa)) is disordered. 2 stretches are compositionally biased toward acidic residues: residues 15–38 (ESPD…DLRD) and 50–62 (AEAE…EEDL). Ser16 carries the phosphoserine modification.

Belongs to the GeBP family.

The sequence is that of Probable transcription factor At3g04930 from Arabidopsis thaliana (Mouse-ear cress).